We begin with the raw amino-acid sequence, 557 residues long: uncharacterized protein (557 aa).

The Helicase ATP-binding domain occupies 70–224 (KVVEKMNGKA…FNLVSLLKPG (155 aa)). 82 to 90 (ADEVGLGKT) provides a ligand contact to ATP. Positions 175 to 178 (DEAH) match the DEAH box motif. The Helicase C-terminal domain occupies 363–524 (QVVDLIKKID…NFEEHLHDIL (162 aa)).

This sequence belongs to the SNF2/RAD54 helicase family.

This is an uncharacterized protein from Bacillus subtilis (strain 168).